The following is a 540-amino-acid chain: SNW/SKI-interacting protein B (540 aa).

Disordered regions lie at residues 1–106 (MVLR…SLTV), 215–273 (GETQ…NPKG), 351–402 (GAAP…RDRD), and 502–526 (ASVAAGKRERPVEFDGPEMEEDPFH). Composition is skewed to basic and acidic residues over residues 16-29 (PHDHTEDEWFKERY) and 83-94 (MGRRGGDGDGEQ). Positions 189–353 (PEFIKYTPAR…KARAEMLGAA (165 aa)) are SNW. Positions 236–251 (AGSPPVPVLRSPPRPP) are enriched in pro residues. Residues 359–382 (ERSKAAAERDAIREERRRERRLEA) are compositionally biased toward basic and acidic residues. Positions 383–393 (RAAAAAASKKS) are enriched in low complexity.

The protein belongs to the SNW family.

It is found in the nucleus. The protein is SNW/SKI-interacting protein B of Oryza sativa subsp. japonica (Rice).